A 378-amino-acid polypeptide reads, in one-letter code: 3-dehydroquinate synthase (378 aa).

NAD(+) is bound by residues 115-119, 139-140, lysine 152, and lysine 161; these read GVVGD and TS. Zn(2+) is bound by residues glutamate 194, histidine 256, and histidine 275.

The protein belongs to the sugar phosphate cyclases superfamily. Dehydroquinate synthase family. Co(2+) is required as a cofactor. It depends on Zn(2+) as a cofactor. Requires NAD(+) as cofactor.

Its subcellular location is the cytoplasm. The enzyme catalyses 7-phospho-2-dehydro-3-deoxy-D-arabino-heptonate = 3-dehydroquinate + phosphate. It participates in metabolic intermediate biosynthesis; chorismate biosynthesis; chorismate from D-erythrose 4-phosphate and phosphoenolpyruvate: step 2/7. In terms of biological role, catalyzes the conversion of 3-deoxy-D-arabino-heptulosonate 7-phosphate (DAHP) to dehydroquinate (DHQ). This chain is 3-dehydroquinate synthase, found in Brucella anthropi (strain ATCC 49188 / DSM 6882 / CCUG 24695 / JCM 21032 / LMG 3331 / NBRC 15819 / NCTC 12168 / Alc 37) (Ochrobactrum anthropi).